Reading from the N-terminus, the 2542-residue chain is MNVSDGGRRRFEDNEHTLRIYPGTISEGTIYCPIPARKNSTAAEVIDSLINRLHLDKTKCYVLAEVKEFGGEEWILNPTDCPVQRMMLWPRMALENRLSGEDYRFLLREKNLDGSIHYGSLQSWLRVTEERRRMMERGFLPQPQQKDFDDLCSLPDLNEKTLLENLRNRFKHEKIYTYVGSILIAINPFKFLPIYNPKYVKMYDNHQLGKLEPHIYAVADVAYHAMLQRKKNQCIVISGESGSGKTQSTNFLIHHLTALSQKGFASGVEQIILGAGPVLEAFGNAKTAHNNNSSRFGKFIQVNYQETGTVLGAYVEKYLLEKSRLVYQEHNERNYHVFYYLLAGASEEERLAFHLKQPEEYHFLNQITKKPLRQSWDDYCYDSEPDCFTVEGEDLRHDFERLQLAMEMVGFLPKTRRQIFSLLSAILHLGNISYKKKTYRDDSIDICNPEVLPIVSELLEVKEEMLFEALVTRKTVTVGEKLILPYKLAEAVTVRNSMAKSLYSALFDWIVFRINHALLNSKDLEQDTKTLSIGVLDIFGFEDYENNSFEQFCINFANERLQHYFNQHIFKLEQEEYRTEGISWHNIDYIDNTCCINLISKKPTGLLHLLDEESNFPQATNQTLLDKFKHQHEENSYIEFPAVMEPAFIIKHYAGKVKYGVKDFREKNTDHMRPDIVALLRSSRNAFVSGMTGIDPVAVFRWAVLRAFFRAVVAFREAGKRHIQRKSGHDDTTPCAILKSMDSFSFLQHPVHQRSLEILQRCKEEKYSITRKNPRTPLSDLQGMNTLNEKNQHDTFDIAWNVRTGIRQSRLPASNTSLLDKDGIFAHSASSKLLERAHGILTRNKNFRSKPVLPKHLLEVNSLKHLTRLTLQDRITKSLLHLHKKKKPPSISAQFQASLSKLMETLGQAEPYFVKCIRSNAEKLPLRFSDALVLRQLRYTGMLETVRIRQSGYSSKYSFQDFVSHFHVLLPQHIIPSKFNIQDFFRKININSDNYQVGKTMVFLKEHERQHLQDLLHQEVLRRIVLLQRWFRVLLSRQQFLHLRQASIIIQRFWRNYLNQKQVRNAAVEKDAFIMASAASLLQASWRAHLERQRYLELRAAAVIIQQRWRELYRCRHKAATCIQSRWRGYRQRKKYKEQRNKIILLQSIYRGFRARQRCNALKEEKLREAKLEHGLVHVKACGPLEIQGSDPSEWEDRSFDNRVKAIEECKYVIESNRISRESSMDFSKESPDKQQERGRRQSGTDLQEDVIVRQRPKSLEDLHQKKVGRAKRESRRMRELEQAIFSLELLKVRSLGGMSPSEERRWSTELMPEGLQSPHGTPDSESSQGSLELLTCDENQKSKPESLILDEGELKISSPNTFTNPKSQDNALSASSETSSTLAGKGASSDSEHLKNGTAKEKLVCSSEPITCKPQLRDSFVSSSLPTFFYIPHQEALKTSSHLDTSIQRNKLPEREAILKTTLTQDINREARKCQFSGDQMTPLNTDSSCTVLKKLEKLNIEKEKRQKQLQQQNEKEMMEQIRQQTDILEKERKAFKTIEQSRTEASVLAPSFYQPRQKVERPCSLYIQNTPSKGEAGVLGSPSAVTKRDAALATKDSPSIHLPPKDRPVTLFFEKKGSPCQSRTVKELPKTERTGTQHDAAYKLSNNRSTERDHFKSTHFYSHRSDDPSREGSSRAIFFTPKDNITPLVHSGNPQAHKQDESAWKPKLAGPGQQETSQRFSSVDEQAKLHKAMSQGEITKLAVRQKASDLDIRPQRAKMRFWAKGKQGEKKTTRVKPASQSEISSFFPGPDVTPAHPFSDELTQYHPTPPLSPELPGSCRKEFKENKEPSPKAKRKRGVKISSVALDSMHWQNDSVQIIASASDLKSMDEFLLKKMNDLDNEDSKKDTLVDVVFKKALKEFRQNIFSSYSSALAMDDGKSIRYKDLYALFEQILEKTMRLEQRDWNESPVRVWVNTFKVFLDEYMNEFKTLDSTAPKVLKTERKKRRKKETDLVEEHNGHIFKATQYSIPTYCEYCSSLIWIMDRASVCKLCKYACHKKCCLKTTAKCSKKYDPELSSRQFGVELSRLTSEDRAVPLVVEKLINYIEMHGLYTEGIYRKSGSTNKIKELRQGLDTDAESVNLDDYNIHVIASVFKQWLRDLPNPLMTFELYEEFLRAMGLQERKETIRGVYSVIDQLSRTHLNTLERLIFHLVRIALQEDTNRMSANALAIVFAPCILRCPDTTDPLQSVQDISKTTTCVELIVVEQMNKYKARLKDISSLEFAENKAKTRLSLIRRSMGKGRIHRGNYPSPSSPVIVRLPSMSDVPEETLSSETAMETDLTDQQQAAMQQEEKVLTEQIENLQKEKEELTFEMLVLEPRASDDETLESEASIGTADSSENLNMDSEERSLALSSLKAAGKSEPSSKSRKQLRKQPDSLDSVSSSVSSCLSNTTSSHGTRKRFQIYSKSPFYRAASACEAQGTEGPLGQAKSLEDRPQFISRGTFNPEKGKQKLKNVKNSPQKTKETPEGTVTSGRKKTVDSDCSSTQQLPLFGNNEFMV.

A Ras-associating domain is found at 14–112 (NEHTLRIYPG…YRFLLREKNL (99 aa)). Residues 146 to 1017 (KDFDDLCSLP…ERQHLQDLLH (872 aa)) form the Myosin motor domain. A helical membrane pass occupies residues 175-195 (IYTYVGSILIAINPFKFLPIY). 239-246 (GESGSGKT) lines the ATP pocket. Ser755 bears the Phosphoserine mark. An actin-binding region spans residues 908–919 (QAEPYFVKCIRS). 5 consecutive IQ domains span residues 1021-1041 (LRRI…QQFL), 1043-1072 (LRQA…EKDA), 1075-1104 (MASA…AAVI), 1116-1145 (RHKA…KIIL), and 1139-1168 (QRNK…EKLR). A neck or regulatory domain region spans residues 1022-1163 (RRIVLLQRWF…RARQRCNALK (142 aa)). Positions 1164–2505 (EEKLREAKLE…LKNVKNSPQK (1342 aa)) are tail. Positions 1221–1240 (RESSMDFSKESPDKQQERGR) are enriched in basic and acidic residues. The interval 1221–1276 (RESSMDFSKESPDKQQERGRRQSGTDLQEDVIVRQRPKSLEDLHQKKVGRAKRESR) is disordered. Position 1243 is a phosphoserine (Ser1243). Thr1245 carries the post-translational modification Phosphothreonine. Phosphoserine is present on Ser1259. Residues 1265–1292 (QKKVGRAKRESRRMRELEQAIFSLELLK) adopt a coiled-coil conformation. Basic residues predominate over residues 1266 to 1276 (KKVGRAKRESR). Phosphoserine is present on residues Ser1300 and Ser1318. Residues 1342–1401 (KSKPESLILDEGELKISSPNTFTNPKSQDNALSASSETSSTLAGKGASSDSEHLKNGTAK) form a disordered region. Positions 1358 to 1371 (SSPNTFTNPKSQDN) are enriched in polar residues. Positions 1372 to 1384 (ALSASSETSSTLA) are enriched in low complexity. Positions 1391–1401 (DSEHLKNGTAK) are enriched in basic and acidic residues. The stretch at 1492–1539 (TVLKKLEKLNIEKEKRQKQLQQQNEKEMMEQIRQQTDILEKERKAFKT) forms a coiled coil. Disordered regions lie at residues 1650 to 1675 (RSTE…REGS), 1693 to 1727 (SGNP…SVDE), 1767 to 1793 (GKQG…PGPD), and 1806 to 1841 (QYHP…KRGV). A compositionally biased stretch (basic and acidic residues) spans 1665-1675 (HRSDDPSREGS). Positions 1715 to 1726 (QQETSQRFSSVD) are enriched in polar residues. The span at 1821-1833 (CRKEFKENKEPSP) shows a compositional bias: basic and acidic residues. Phosphoserine is present on Ser1950. 2 consecutive Phorbol-ester/DAG-type zinc fingers follow at residues 2001–2050 (GHIF…TAKC) and 2068–2119 (SRLT…DTDA). Residues 2065–2253 (VELSRLTSED…LIVVEQMNKY (189 aa)) form the Rho-GAP domain. Phosphoserine is present on residues Ser2293 and Ser2296. Residues 2324–2360 (TDQQQAAMQQEEKVLTEQIENLQKEKEELTFEMLVLE) adopt a coiled-coil conformation. The tract at residues 2361–2443 (PRASDDETLE…NTTSSHGTRK (83 aa)) is disordered. A compositionally biased stretch (polar residues) spans 2377-2386 (TADSSENLNM). A compositionally biased stretch (low complexity) spans 2420-2438 (SLDSVSSSVSSCLSNTTSS). Phosphoserine is present on Ser2458. Residues 2465–2530 (TEGPLGQAKS…TVDSDCSSTQ (66 aa)) are disordered.

The protein belongs to the TRAFAC class myosin-kinesin ATPase superfamily. Myosin family. Post-translationally, phosphorylated by ALPK1 following monosodium urate monohydrate (MSU)-induced inflammation. As to expression, expressed in the eye, lung, liver, brain, heart, kidney, skeletal muscle and spleen. No detection was found in liver. In the brain, expressed in the ependymal cells of the third ventricle and the aqueduct.

The protein resides in the membrane. It localises to the cytoplasm. It is found in the synapse. The protein localises to the cell projection. Its subcellular location is the growth cone. Myosins are actin-based motor molecules with ATPase activity. Unconventional myosins serve in intracellular movements. Regulates Rho by stimulating it's GTPase activity in neurons. Required for the regulation of neurite branching and motor neuron axon guidance. This chain is Unconventional myosin-IXa (Myo9a), found in Mus musculus (Mouse).